Reading from the N-terminus, the 73-residue chain is Mu-scoloptoxin(15)-Ssd1a (73 aa).

Positions 1-20 (MKFHIIFCLLAALMMTSAFA) are cleaved as a signal peptide.

Post-translationally, contains 2 disulfide bonds. As to expression, expressed by the venom gland.

The protein resides in the secreted. Its function is as follows. Voltage-gated sodium channel inhibitor. This is Mu-scoloptoxin(15)-Ssd1a from Scolopendra dehaani (Thai centipede).